The primary structure comprises 264 residues: Acyl-[acyl-carrier-protein]--UDP-N-acetylglucosamine O-acyltransferase (264 aa).

The protein belongs to the transferase hexapeptide repeat family. LpxA subfamily. In terms of assembly, homotrimer.

It is found in the cytoplasm. The catalysed reaction is a (3R)-hydroxyacyl-[ACP] + UDP-N-acetyl-alpha-D-glucosamine = a UDP-3-O-[(3R)-3-hydroxyacyl]-N-acetyl-alpha-D-glucosamine + holo-[ACP]. Its pathway is glycolipid biosynthesis; lipid IV(A) biosynthesis; lipid IV(A) from (3R)-3-hydroxytetradecanoyl-[acyl-carrier-protein] and UDP-N-acetyl-alpha-D-glucosamine: step 1/6. Its function is as follows. Involved in the biosynthesis of lipid A, a phosphorylated glycolipid that anchors the lipopolysaccharide to the outer membrane of the cell. The protein is Acyl-[acyl-carrier-protein]--UDP-N-acetylglucosamine O-acyltransferase of Chlorobaculum parvum (strain DSM 263 / NCIMB 8327) (Chlorobium vibrioforme subsp. thiosulfatophilum).